The primary structure comprises 405 residues: Argininosuccinate synthase (405 aa).

Residues 10–18 and A37 each bind ATP; that span reads AYSGGLDTS. The L-citrulline site is built by Y88 and S93. An ATP-binding site is contributed by G118. T120, N124, and D125 together coordinate L-aspartate. Residue N124 participates in L-citrulline binding. L-citrulline contacts are provided by R128, S179, S188, E264, and Y276.

Belongs to the argininosuccinate synthase family. Type 1 subfamily. In terms of assembly, homotetramer.

The protein resides in the cytoplasm. It catalyses the reaction L-citrulline + L-aspartate + ATP = 2-(N(omega)-L-arginino)succinate + AMP + diphosphate + H(+). It functions in the pathway amino-acid biosynthesis; L-arginine biosynthesis; L-arginine from L-ornithine and carbamoyl phosphate: step 2/3. This is Argininosuccinate synthase from Stutzerimonas stutzeri (strain A1501) (Pseudomonas stutzeri).